The primary structure comprises 164 residues: MTTETAPITLYVDADACPVKDEIYRVAIRHGLAVIVVAGGFIRVPDDPLITRVAAGSGMDAADDWIAEHTGPDDIVITADIPLASRCVKAGSAVIAPNGKPFTEESMGMTLAVRNLMTDLRSSGEVTGGPRSFTPRDRSTFLSTLDTTIRRVQRQRAARIQQQS.

This sequence belongs to the UPF0178 family.

The polypeptide is UPF0178 protein BRADO3147 (Bradyrhizobium sp. (strain ORS 278)).